We begin with the raw amino-acid sequence, 110 residues long: Guanine nucleotide-binding protein subunit gamma (110 aa).

Cysteine 106 carries S-palmitoyl cysteine lipidation. Residue cysteine 107 is modified to Cysteine methyl ester. Cysteine 107 carries S-farnesyl cysteine lipidation. Residues 108–110 (TLM) constitute a propeptide, removed in mature form.

The protein belongs to the G protein gamma family. In terms of assembly, g proteins are composed of 3 units, alpha, beta and gamma. The beta-gamma subunit complex (STE4-STE18 complex) interacts with PLP1 and PLP2.

The protein localises to the membrane. Functionally, implicated in the pheromone A- and alpha-factor response pathway. The beta and gamma chains of the putative yeast mating response pathway G protein play a positive role in initiation of the mating response. The sequence is that of Guanine nucleotide-binding protein subunit gamma (STE18) from Saccharomyces cerevisiae (strain ATCC 204508 / S288c) (Baker's yeast).